The primary structure comprises 426 residues: Adenylosuccinate synthetase (426 aa).

Residues 14–20 (GDEGKGK) and 42–44 (GHT) contribute to the GTP site. The active-site Proton acceptor is the aspartate 15. Residues aspartate 15 and glycine 42 each contribute to the Mg(2+) site. Residues 15 to 18 (DEGK), 40 to 43 (NAGH), threonine 130, arginine 144, glutamine 224, threonine 239, and arginine 303 each bind IMP. Residue histidine 43 is the Proton donor of the active site. 299 to 305 (TVTKRPR) provides a ligand contact to substrate. GTP-binding positions include arginine 305, 331 to 333 (LID), and 413 to 415 (SVG).

The protein belongs to the adenylosuccinate synthetase family. In terms of assembly, homodimer. The cofactor is Mg(2+).

The protein resides in the cytoplasm. It catalyses the reaction IMP + L-aspartate + GTP = N(6)-(1,2-dicarboxyethyl)-AMP + GDP + phosphate + 2 H(+). The protein operates within purine metabolism; AMP biosynthesis via de novo pathway; AMP from IMP: step 1/2. Functionally, plays an important role in the de novo pathway of purine nucleotide biosynthesis. Catalyzes the first committed step in the biosynthesis of AMP from IMP. The protein is Adenylosuccinate synthetase of Malacoplasma penetrans (strain HF-2) (Mycoplasma penetrans).